The sequence spans 257 residues: Diacetyl reductase [(S)-acetoin forming] (257 aa).

Residue 6–30 coordinates NAD(+); sequence IITGAAGGLGKGIAERLANDGFNIV. S139 contacts substrate. The active-site Proton acceptor is Y152. K156 is a catalytic residue.

This sequence belongs to the short-chain dehydrogenases/reductases (SDR) family.

It catalyses the reaction (S)-acetoin + NAD(+) = diacetyl + NADH + H(+). In terms of biological role, catalyzes the irreversible reduction of 2,3-butanediol to (S)-acetoin in the presence of NADH. This chain is Diacetyl reductase [(S)-acetoin forming] (butA), found in Staphylococcus epidermidis (strain ATCC 12228 / FDA PCI 1200).